Reading from the N-terminus, the 186-residue chain is uncharacterized protein (186 aa).

This sequence to M.jannaschii MJ0208.

This is an uncharacterized protein from Methanocaldococcus jannaschii (strain ATCC 43067 / DSM 2661 / JAL-1 / JCM 10045 / NBRC 100440) (Methanococcus jannaschii).